The sequence spans 146 residues: Ribonuclease H (146 aa).

Residues 4–145 (ELNKVVVYTD…ADMLARSQIV (142 aa)) enclose the RNase H type-1 domain. Asp-13, Glu-51, Asp-73, and Asp-137 together coordinate Mg(2+).

This sequence belongs to the RNase H family. In terms of assembly, monomer. The cofactor is Mg(2+).

Its subcellular location is the cytoplasm. It carries out the reaction Endonucleolytic cleavage to 5'-phosphomonoester.. Endonuclease that specifically degrades the RNA of RNA-DNA hybrids. The polypeptide is Ribonuclease H (Ehrlichia ruminantium (strain Gardel)).